A 373-amino-acid chain; its full sequence is 3 beta-hydroxysteroid dehydrogenase/Delta 5--&gt;4-isomerase type 1 (373 aa).

Residues 10–15 (GAGGFL), Tyr-155, and Lys-159 each bind NADP(+). Lys-159 acts as the Proton donor in catalysis. A helical transmembrane segment spans residues 288–308 (VALLYWLGFLLELVSFLLRPV).

The protein belongs to the 3-beta-HSD family. High levels in adrenal gland, kidney and male liver. Low levels in female liver.

Its subcellular location is the endoplasmic reticulum membrane. It localises to the mitochondrion membrane. It catalyses the reaction a 3beta-hydroxy-Delta(5)-steroid + NAD(+) = a 3-oxo-Delta(5)-steroid + NADH + H(+). It carries out the reaction pregnenolone + NAD(+) = pregn-5-ene-3,20-dione + NADH + H(+). The enzyme catalyses 3beta-hydroxyandrost-5-en-17-one + NAD(+) = androst-5-ene-3,17-dione + NADH + H(+). The catalysed reaction is androst-5-en-3beta,17beta-diol + NAD(+) = 17beta-hydroxy-androst-5-en-3-one + NADH + H(+). It catalyses the reaction a 3beta-hydroxysteroid + NADP(+) = a 3-oxosteroid + NADPH + H(+). It carries out the reaction 5alpha-androstane-3beta,17beta-diol + NADP(+) = 17beta-hydroxy-5alpha-androstan-3-one + NADPH + H(+). The enzyme catalyses 3beta-hydroxy-5alpha-androstan-17-one + NADP(+) = 5alpha-androstan-3,17-dione + NADPH + H(+). The catalysed reaction is a 3-oxo-Delta(5)-steroid = a 3-oxo-Delta(4)-steroid. It catalyses the reaction pregn-5-ene-3,20-dione = progesterone. It carries out the reaction androst-5-ene-3,17-dione = androst-4-ene-3,17-dione. The enzyme catalyses 17beta-hydroxy-androst-5-en-3-one = testosterone. The catalysed reaction is 5alpha-androstane-3beta,17beta-diol + NAD(+) = 17beta-hydroxy-5alpha-androstan-3-one + NADH + H(+). The protein operates within steroid hormone biosynthesis. Its pathway is steroid metabolism. Functionally, a bifunctional enzyme responsible for the oxidation and isomerization of 3beta-hydroxy-Delta(5)-steroid precursors to 3-oxo-Delta(4)-steroids, an essential step in steroid hormone biosynthesis. Specifically catalyzes the conversion of pregnenolone to progesterone, 17alpha-hydroxypregnenolone to 17alpha-hydroxyprogesterone, dehydroepiandrosterone (DHEA) to 4-androstenedione, and androstenediol to testosterone. Additionally, catalyzes the interconversion between 3beta-hydroxy and 3-oxo-5alpha-androstane steroids controlling the bioavalability of the active forms. Specifically converts dihydrotestosterone to its inactive form 5alpha-androstanediol, that does not bind androgen receptor/AR. Also converts androstanedione, a precursor of testosterone and estrone, to epiandrosterone. Expected to use NAD(+) as preferred electron donor for the 3-beta-hydroxy-steroid dehydrogenase activity and NADPH for the 3-ketosteroid reductase activity. The chain is 3 beta-hydroxysteroid dehydrogenase/Delta 5--&gt;4-isomerase type 1 (HSD3B1) from Mesocricetus auratus (Golden hamster).